The primary structure comprises 186 residues: Large ribosomal subunit protein uL6 (186 aa).

The protein belongs to the universal ribosomal protein uL6 family. In terms of assembly, part of the 50S ribosomal subunit.

Functionally, this protein binds to the 23S rRNA, and is important in its secondary structure. It is located near the subunit interface in the base of the L7/L12 stalk, and near the tRNA binding site of the peptidyltransferase center. In Ignicoccus hospitalis (strain KIN4/I / DSM 18386 / JCM 14125), this protein is Large ribosomal subunit protein uL6.